Reading from the N-terminus, the 454-residue chain is Bifunctional protein GlmU (454 aa).

The tract at residues 1-226 is pyrophosphorylase; it reads MALNVVILAA…AVEVEGANNR (226 aa). Residues 8-11, Lys22, Gln73, 78-79, 100-102, Gly137, Glu151, Asn166, and Asn224 contribute to the UDP-N-acetyl-alpha-D-glucosamine site; these read LAAG, GT, and YGD. Asp102 lines the Mg(2+) pocket. Mg(2+) is bound at residue Asn224. The segment at 227 to 247 is linker; that stretch reads VQLAQLERAYQARAAEKLMLE. Residues 248 to 454 are N-acetyltransferase; it reads GANLRDPARI…GWARPVKKAK (207 aa). Arg330 and Lys348 together coordinate UDP-N-acetyl-alpha-D-glucosamine. His360 (proton acceptor) is an active-site residue. Residues Tyr363 and Asn374 each coordinate UDP-N-acetyl-alpha-D-glucosamine. Residues Ala377, 383–384, Ser402, Ala420, and Arg437 contribute to the acetyl-CoA site; that span reads NY.

The protein in the N-terminal section; belongs to the N-acetylglucosamine-1-phosphate uridyltransferase family. In the C-terminal section; belongs to the transferase hexapeptide repeat family. As to quaternary structure, homotrimer. The cofactor is Mg(2+).

The protein localises to the cytoplasm. The enzyme catalyses alpha-D-glucosamine 1-phosphate + acetyl-CoA = N-acetyl-alpha-D-glucosamine 1-phosphate + CoA + H(+). It carries out the reaction N-acetyl-alpha-D-glucosamine 1-phosphate + UTP + H(+) = UDP-N-acetyl-alpha-D-glucosamine + diphosphate. The protein operates within nucleotide-sugar biosynthesis; UDP-N-acetyl-alpha-D-glucosamine biosynthesis; N-acetyl-alpha-D-glucosamine 1-phosphate from alpha-D-glucosamine 6-phosphate (route II): step 2/2. It functions in the pathway nucleotide-sugar biosynthesis; UDP-N-acetyl-alpha-D-glucosamine biosynthesis; UDP-N-acetyl-alpha-D-glucosamine from N-acetyl-alpha-D-glucosamine 1-phosphate: step 1/1. Its pathway is bacterial outer membrane biogenesis; LPS lipid A biosynthesis. Its function is as follows. Catalyzes the last two sequential reactions in the de novo biosynthetic pathway for UDP-N-acetylglucosamine (UDP-GlcNAc). The C-terminal domain catalyzes the transfer of acetyl group from acetyl coenzyme A to glucosamine-1-phosphate (GlcN-1-P) to produce N-acetylglucosamine-1-phosphate (GlcNAc-1-P), which is converted into UDP-GlcNAc by the transfer of uridine 5-monophosphate (from uridine 5-triphosphate), a reaction catalyzed by the N-terminal domain. The protein is Bifunctional protein GlmU of Shewanella piezotolerans (strain WP3 / JCM 13877).